Consider the following 274-residue polypeptide: 2-amino-4,5-dihydroxy-6-oxo-7-(phosphonooxy)heptanoate synthase (274 aa).

Belongs to the DeoC/FbaB aldolase family. GriI subfamily. In terms of assembly, homodecamer.

The catalysed reaction is 2-amino-4,5-dihydroxy-6-oxo-7-(phosphooxy)heptanoate = L-aspartate 4-semialdehyde + dihydroxyacetone phosphate. In terms of biological role, catalyzes aldol condensation between L-aspartate-4-semialdehyde (ASA) and dihydroxyacetone phosphate (DHAP), to form 2-amino-4,5-dihydroxy-6-oxo-7-(phosphonooxy)heptanoate. The polypeptide is 2-amino-4,5-dihydroxy-6-oxo-7-(phosphonooxy)heptanoate synthase (griI) (Streptomyces griseus subsp. griseus (strain JCM 4626 / CBS 651.72 / NBRC 13350 / KCC S-0626 / ISP 5235)).